Here is an 889-residue protein sequence, read N- to C-terminus: Protein SEY1 homolog (889 aa).

Residues methionine 1–asparagine 801 are Cytoplasmic-facing. One can recognise a GB1/RHD3-type G domain in the interval glycine 31–cysteine 277. Glycine 41–serine 48 lines the GTP pocket. Residues arginine 429–threonine 449 are disordered. Residues leucine 679–serine 699 are a coiled coil. Residues valine 802–threonine 822 traverse the membrane as a helical segment. Residues arginine 823–phenylalanine 825 are Lumenal-facing. The helical transmembrane segment at phenylalanine 826 to valine 846 threads the bilayer. Residues phenylalanine 847 to aspartate 889 lie on the Cytoplasmic side of the membrane.

Belongs to the TRAFAC class dynamin-like GTPase superfamily. GB1/RHD3 GTPase family. RHD3 subfamily.

The protein resides in the endoplasmic reticulum membrane. Functionally, probable GTP-binding protein involved in generating and maintaining the structure of the tubular endoplasmic reticulum network. The protein is Protein SEY1 homolog of Plasmodium vivax (strain Salvador I).